Here is a 355-residue protein sequence, read N- to C-terminus: Fructose-1,6-bisphosphatase (355 aa).

Residues 25 to 30 (ILDQQH) and 37 to 41 (TGEFS) each bind AMP. Mg(2+) contacts are provided by Asp78 and Glu107. 121 to 122 (KY) lines the AMP pocket. Mg(2+)-binding residues include Asp127, Ile129, and Asp130. Position 130 to 133 (130 to 133 (DGSS)) interacts with substrate. An AMP-binding site is contributed by Lys149. Residues 230–233 (NEGN), 263–268 (RYIGSM), Tyr284, and 294–296 (KLR) contribute to the substrate site. Glu300 contacts Mg(2+).

Belongs to the FBPase class 1 family. Homotetramer. Mg(2+) is required as a cofactor.

It catalyses the reaction beta-D-fructose 1,6-bisphosphate + H2O = beta-D-fructose 6-phosphate + phosphate. It functions in the pathway carbohydrate biosynthesis; gluconeogenesis. With respect to regulation, subject to complex allosteric regulation. The enzyme can assume an active R-state, or an inactive T-state. Intermediate conformations may exist. AMP acts as allosteric inhibitor. AMP binding affects the turnover of bound substrate and not the affinity for substrate. This is Fructose-1,6-bisphosphatase (FBP1) from Kluyveromyces lactis (strain ATCC 8585 / CBS 2359 / DSM 70799 / NBRC 1267 / NRRL Y-1140 / WM37) (Yeast).